Consider the following 302-residue polypeptide: Ribosomal RNA small subunit methyltransferase H (302 aa).

Residues 36-38 (GGH), aspartate 56, phenylalanine 84, aspartate 99, and glutamine 106 contribute to the S-adenosyl-L-methionine site.

The protein belongs to the methyltransferase superfamily. RsmH family.

The protein localises to the cytoplasm. The catalysed reaction is cytidine(1402) in 16S rRNA + S-adenosyl-L-methionine = N(4)-methylcytidine(1402) in 16S rRNA + S-adenosyl-L-homocysteine + H(+). Specifically methylates the N4 position of cytidine in position 1402 (C1402) of 16S rRNA. This is Ribosomal RNA small subunit methyltransferase H from Christiangramia forsetii (strain DSM 17595 / CGMCC 1.15422 / KT0803) (Gramella forsetii).